Reading from the N-terminus, the 328-residue chain is Helicase VP6-A (328 aa).

2 disordered regions span residues 31-128 (DWTE…TGAN) and 180-237 (VAEQ…SVGI). 3 stretches are compositionally biased toward basic and acidic residues: residues 36–61 (ETNK…EGRN), 71–83 (AKET…DRRI), and 96–109 (PGER…RGDG). Residue lysine 110 coordinates ATP. The span at 110–128 (KVGGGGGDADAGVGTTGAN) shows a compositional bias: gly residues. Composition is skewed to basic and acidic residues over residues 180–205 (VAEQ…AAER) and 214–230 (PHGD…KTSE).

This sequence belongs to the orbivirus VP6 family. As to quaternary structure, homohexamer.

The protein resides in the virion. The catalysed reaction is ATP + H2O = ADP + phosphate + H(+). Functionally, ATP dependent RNA helicase essential for RNA packaging and viral transcription. Possesses ss- and dsRNA-binding capacity. The protein is Helicase VP6-A (Segment-9) of Bluetongue virus 1 (isolate South Africa) (BTV 1).